Reading from the N-terminus, the 86-residue chain is Anti-adapter protein IraP (86 aa).

A coiled-coil region spans residues 1 to 47; sequence MKNLIAELLLKLAQKEEESKELVAQVEALEIIVTAMLRNMAQSEQQM.

It belongs to the IraP family. As to quaternary structure, interacts with RssB.

The protein resides in the cytoplasm. In terms of biological role, inhibits RpoS proteolysis by regulating RssB activity, thereby increasing the stability of the sigma stress factor RpoS especially during phosphate and magnesium starvation, but also in stationary phase and during nitrogen starvation. Its effect on RpoS stability is due to its interaction with RssB, which probably blocks the interaction of RssB with RpoS, and the consequent delivery of the RssB-RpoS complex to the ClpXP protein degradation pathway. The sequence is that of Anti-adapter protein IraP from Salmonella arizonae (strain ATCC BAA-731 / CDC346-86 / RSK2980).